The chain runs to 452 residues: Heat shock protein 83 (452 aa).

ATP is bound at residue R124. The short motif at 448-452 (MEQVD) is the TPR repeat-binding element.

Belongs to the heat shock protein 90 family. Homodimer.

It localises to the cytoplasm. In terms of biological role, molecular chaperone that promotes the maturation, structural maintenance and proper regulation of specific target proteins involved for instance in cell cycle control and signal transduction. Undergoes a functional cycle that is linked to its ATPase activity. This cycle probably induces conformational changes in the client proteins, thereby causing their activation. Interacts dynamically with various co-chaperones that modulate its substrate recognition, ATPase cycle and chaperone function. The protein is Heat shock protein 83 (HSP83) of Leishmania donovani.